A 1124-amino-acid chain; its full sequence is RTFVKKYSASRQFTGEGYLEYRTTSGNIIDSDKDELRVEFSTVQPSGLLFYARNSGGPFADYVALELVGGRLRFSIRYGRSSHSTENLHETLLGKNLNDAKSHSVEILHDKDVTTIYLDKTSDQEKAEHSFKTKYTKLDIDVAMYVGGAFDFKALLSVKSNALFMGCIFQAEFKKILPGPEKVIDFLKDDKVTTYPRTMNQKCVAQTYEPFTFSSDDSSFVCSVGGLSSANSLSGSFVFRTYKPSGVLLKQVDGGNGFELSYMEMDVQLKVIIRNSETLLNINYQNELTKINKGNWHYVTFNISQTSFELSVGSKRETRTPAVTLPSNFFKDGLTAGGFVGCMNELIINKQKCQPNAGSRIKNVEWSGCNITDFCIFSPCLHGGECTQTGKTFSCGCSGTGYDKGPNSLSVCQFSESESTCESLKKNNPSLSLSDRSYALDFDDSGPIRTYKAFCNFSADPPTTRVESRDFKIKLTPSKQPISQRISYEPSLDAAKALARRSEWCYQFVDFGCKKAKLHTGSNNEKLGFWVSSNGVYQSYWGGAKQGSRSCACGETNPNSCIDSSKKCNCDAGLDKWHNDEGYLNSTTLLPVVEVMFKGVTSGTEANFTVGHLYCAGEISNTATFVNEDGFIKLEKWSPPSNGVISLFFKTPYEKGVLLYNGMPEKDFFQVEIINETSVGLSYNIGNGVRKIELSLGDKQVNDRSWHHVMIYHNMKVFGFRLDNQEGKHENPLFLKRELNLNNELYVAGYPYDVSKGFVGCIRGLDVNGEVQDLSKLAGEAVFVKSGCGAACENNSCKNHAKCLDNYNVYFCDCSKTPYYGYFCHEENGASFKDPGSQLVYEYPSASDVFRFDIVVGFKLGEGKPCIGDIIRLGSSDKSQFYRLSLTNRKLQFDFKGPRGQGSITIDPPSVGDFCRDVHTFALSRRYKVVNYTIDGVKKPKEEIERLDGLFTSMKKVTIGKEGDGGFKGCITGVKVTREAVGQKPETVEPIKEYLYDDKNTDLVTSKHVSRATCGPEPKVPEIPTPRPVGQRADVSTPQGITTNPKLQAEDDDKTAIIVVVVLILVLLLVVLILVIYWYWARHKGEYHTHEDDEELKATDPYIEPAAPRKLKGEEPEKKKEWYI.

Over 1-1055 (RTFVKKYSAS…KLQAEDDDKT (1055 aa)) the chain is Extracellular. 2 consecutive Laminin G-like domains span residues 8-203 (SASR…NQKC) and 210-369 (PFTF…WSGC). Cystine bridges form between Cys167–Cys203, Cys342–Cys369, Cys375–Cys386, Cys380–Cys395, Cys397–Cys412, Cys761–Cys788, Cys792–Cys803, Cys797–Cys812, and Cys814–Cys824. One can recognise an EGF-like 1 domain in the interval 371–413 (ITDFCIFSPCLHGGECTQTGKTFSCGCSGTGYDKGPNSLSVCQ). In terms of domain architecture, Laminin G-like 3 spans 621-788 (NTATFVNEDG…GEAVFVKSGC (168 aa)). Positions 789 to 825 (GAACENNSCKNHAKCLDNYNVYFCDCSKTPYYGYFCH) constitute an EGF-like 2 domain. A disordered region spans residues 1011–1047 (RATCGPEPKVPEIPTPRPVGQRADVSTPQGITTNPKL). Residues 1034-1046 (DVSTPQGITTNPK) show a composition bias toward polar residues. A helical membrane pass occupies residues 1056–1076 (AIIVVVVLILVLLLVVLILVI). Topologically, residues 1077-1124 (YWYWARHKGEYHTHEDDEELKATDPYIEPAAPRKLKGEEPEKKKEWYI) are cytoplasmic. Residues 1090 to 1124 (HEDDEELKATDPYIEPAAPRKLKGEEPEKKKEWYI) are disordered. Basic and acidic residues predominate over residues 1111–1124 (LKGEEPEKKKEWYI).

Component of the acid-insoluble organic matrix of the aragonitic skeleton (at protein level).

The protein localises to the membrane. The chain is EGF and laminin G domain-containing protein from Acropora millepora (Staghorn coral).